The following is a 206-amino-acid chain: MRYPIWRVGVFIAAAVWPLFWLYEAWSAVLGPDPGKVLVDRLGLGTLILLLITLAMTPLQKLSGWAGWIAVRRQLGLWCFAYVVLHLAAYCVFVLGLDWSQLGVELRKRPYIIVGALGFLLLLVLAVTSNRYSQRRLGSRWKKLHRLVYVVLGLGLLHMLWIVRADLKEWAIYASIGALLLVLRIPPVMRRIPRLIAKKPLSATKA.

6 helical membrane passes run 10–30 (VFIAAAVWPLFWLYEAWSAVL), 42–62 (LGLGTLILLLITLAMTPLQKL), 75–95 (LGLWCFAYVVLHLAAYCVFVL), 110–130 (PYIIVGALGFLLLLVLAVTSN), 147–167 (LVYVVLGLGLLHMLWIVRADL), and 169–189 (EWAIYASIGALLLVLRIPPVM).

This sequence belongs to the MsrQ family. In terms of assembly, heterodimer of a catalytic subunit (MsrP) and a heme-binding subunit (MsrQ). FMN is required as a cofactor. Heme b serves as cofactor.

The protein resides in the cell inner membrane. Functionally, part of the MsrPQ system that repairs oxidized periplasmic proteins containing methionine sulfoxide residues (Met-O), using respiratory chain electrons. Thus protects these proteins from oxidative-stress damage caused by reactive species of oxygen and chlorine generated by the host defense mechanisms. MsrPQ is essential for the maintenance of envelope integrity under bleach stress, rescuing a wide series of structurally unrelated periplasmic proteins from methionine oxidation. MsrQ provides electrons for reduction to the reductase catalytic subunit MsrP, using the quinone pool of the respiratory chain. The protein is Protein-methionine-sulfoxide reductase heme-binding subunit MsrQ of Pseudomonas fluorescens (strain SBW25).